Here is a 100-residue protein sequence, read N- to C-terminus: UPF0213 protein YhbQ (100 aa).

The GIY-YIG domain occupies 2–77 (TPWFLYLIRT…KQLTKRQKER (76 aa)).

Belongs to the UPF0213 family.

In Escherichia coli O7:K1 (strain IAI39 / ExPEC), this protein is UPF0213 protein YhbQ.